Here is a 382-residue protein sequence, read N- to C-terminus: Alkanesulfonate monooxygenase (382 aa).

It belongs to the SsuD family.

The catalysed reaction is an alkanesulfonate + FMNH2 + O2 = an aldehyde + FMN + sulfite + H2O + 2 H(+). Catalyzes the desulfonation of aliphatic sulfonates. The chain is Alkanesulfonate monooxygenase from Pseudomonas putida (strain GB-1).